The following is a 795-amino-acid chain: Phenylalanine--tRNA ligase beta subunit (795 aa).

In terms of domain architecture, tRNA-binding spans 39-148 (AGSFHGVVVG…ADAPIGTDIR (110 aa)). Positions 401 to 476 (PKRATITLRR…RVYGYNNIPD (76 aa)) constitute a B5 domain. Mg(2+) contacts are provided by aspartate 454, aspartate 460, glutamate 463, and glutamate 464. The 94-residue stretch at 701–794 (SRFPANRRDI…LKERFQASLR (94 aa)) folds into the FDX-ACB domain.

Belongs to the phenylalanyl-tRNA synthetase beta subunit family. Type 1 subfamily. In terms of assembly, tetramer of two alpha and two beta subunits. Mg(2+) serves as cofactor.

It localises to the cytoplasm. It carries out the reaction tRNA(Phe) + L-phenylalanine + ATP = L-phenylalanyl-tRNA(Phe) + AMP + diphosphate + H(+). The polypeptide is Phenylalanine--tRNA ligase beta subunit (Shigella flexneri).